A 391-amino-acid polypeptide reads, in one-letter code: ATP-sensitive inward rectifier potassium channel 1 (391 aa).

Over 1–77 the chain is Cytoplasmic; sequence MNASSRNVFD…IWTTVLDLKW (77 aa). S44 carries the post-translational modification Phosphoserine; by SGK1. Residues 78-102 form a helical membrane-spanning segment; sequence RYKMTIFITAFLGSWFFFGLLWYAV. The Extracellular portion of the chain corresponds to 103-127; the sequence is AYIHKDLPEFHPSANHTPCVENING. N117 carries an N-linked (GlcNAc...) asparagine glycan. Residues 128–139 constitute an intramembrane region (helical; Pore-forming); the sequence is LTSAFLFSLETQ. Residues 140–146 constitute an intramembrane region (pore-forming); that stretch reads VTIGYGF. The Selectivity filter signature appears at 141-146; the sequence is TIGYGF. Over 147–155 the chain is Extracellular; the sequence is RCVTEQCAT. The chain crosses the membrane as a helical span at residues 156–177; that stretch reads AIFLLIFQSILGVIINSFMCGA. At 178 to 391 the chain is on the cytoplasmic side; sequence ILAKISRPKK…EVNETDDTKM (214 aa). The polyphosphoinositide (PIP2)-binding stretch occupies residues 180–207; that stretch reads AKISRPKKRAKTITFSKNAVISKRGGKL. Position 223–230 (223–230) interacts with ATP; sequence GSHIYGKL.

It belongs to the inward rectifier-type potassium channel (TC 1.A.2.1) family. KCNJ1 subfamily. As to quaternary structure, interacts with SGK1 and SLC9A3R2/NHERF2. Post-translationally, phosphorylation at Ser-44 by SGK1 is necessary for its expression at the cell membrane. In terms of tissue distribution, in the kidney and pancreatic islets. Lower levels in skeletal muscle, pancreas, spleen, brain, heart and liver.

Its subcellular location is the cell membrane. It carries out the reaction K(+)(in) = K(+)(out). Inhibited by WNK3. Activated by phosphatidylinositol 4,5 biphosphate (PtdIns(4,5)P2). Inward rectifier potassium channels are characterized by a greater tendency to allow potassium to flow into the cell rather than out of it. Their voltage dependence is regulated by the concentration of extracellular potassium; as external potassium is raised, the voltage range of the channel opening shifts to more positive voltages. The inward rectification is mainly due to the blockage of outward current by internal magnesium. This channel is activated by internal ATP and can be blocked by external barium. In the kidney, probably plays a major role in potassium homeostasis. The chain is ATP-sensitive inward rectifier potassium channel 1 (KCNJ1) from Homo sapiens (Human).